The following is a 345-amino-acid chain: Protein sdf-9 (345 aa).

In terms of domain architecture, Tyrosine-protein phosphatase spans 33–284 (NRNRVVKIVP…SFIYEAVLDY (252 aa)).

Belongs to the protein-tyrosine phosphatase family. Expressed in the 2 embryonic head hypodermal cells XXXL/R.

It localises to the cytoplasm. It is found in the cell membrane. In terms of biological role, together with eak-4 and phosphatase eak-6, negatively regulates dauer larva formation downstream of insulin-like receptor daf-2 and in parallel of age-1, pdk-1 and akt-1. The chain is Protein sdf-9 from Caenorhabditis elegans.